A 222-amino-acid chain; its full sequence is Putative germin-like protein subfamily 1 member 9 (222 aa).

The first 22 residues, 1-22 (MKSFSFLAVLSILAITLSLSKA), serve as a signal peptide directing secretion. C32 and C49 are joined by a disulfide. The Cupin type-1 domain occupies 63–213 (TGLHEARPPN…AFQVDPKIVM (151 aa)). N-linked (GlcNAc...) asparagine glycosylation is present at N78. Residues H111, H113, E118, and H159 each coordinate Mn(2+).

This sequence belongs to the germin family. As to quaternary structure, oligomer (believed to be a pentamer but probably hexamer).

It is found in the secreted. It localises to the extracellular space. Its subcellular location is the apoplast. Functionally, may play a role in plant defense. Probably has no oxalate oxidase activity even if the active site is conserved. This chain is Putative germin-like protein subfamily 1 member 9, found in Arabidopsis thaliana (Mouse-ear cress).